A 74-amino-acid chain; its full sequence is Antitoxin VapB39 (74 aa).

In terms of biological role, antitoxin component of a type II toxin-antitoxin (TA) system. In Mycobacterium tuberculosis (strain CDC 1551 / Oshkosh), this protein is Antitoxin VapB39 (vapB39).